The primary structure comprises 79 residues: PLLLTLVVVTIVCLDLGYTMTCCNQQSSQPKTTTNCAESSCYKKTWSDHRGTRIERGCGCPQVKSGIKLECCHTNECNN.

Residues 1–19 (PLLLTLVVVTIVCLDLGYT) form the signal peptide. Intrachain disulfides connect cysteine 22–cysteine 41, cysteine 36–cysteine 58, cysteine 60–cysteine 71, and cysteine 72–cysteine 77.

Belongs to the three-finger toxin family. Short-chain subfamily. Type I alpha-neurotoxin sub-subfamily. In terms of tissue distribution, expressed by the venom gland.

The protein localises to the secreted. In terms of biological role, binds to muscle nicotinic acetylcholine receptor (nAChR) and inhibit acetylcholine from binding to the receptor, thereby impairing neuromuscular transmission. The chain is Short neurotoxin 2 from Hydrophis cyanocinctus (Asian annulated sea snake).